We begin with the raw amino-acid sequence, 252 residues long: Flagellar L-ring protein (252 aa).

Positions 1–25 are cleaved as a signal peptide; that stretch reads MSKSVPLQRIVLVAALMATGGLAGG. Residue Cys-26 is the site of N-palmitoyl cysteine attachment. The S-diacylglycerol cysteine moiety is linked to residue Cys-26.

It belongs to the FlgH family. As to quaternary structure, the basal body constitutes a major portion of the flagellar organelle and consists of four rings (L,P,S, and M) mounted on a central rod.

The protein resides in the cell outer membrane. It is found in the bacterial flagellum basal body. In terms of biological role, assembles around the rod to form the L-ring and probably protects the motor/basal body from shearing forces during rotation. This is Flagellar L-ring protein from Rhodopseudomonas palustris (strain ATCC BAA-98 / CGA009).